The chain runs to 878 residues: Alanine--tRNA ligase (878 aa).

4 residues coordinate Zn(2+): His-558, His-562, Cys-663, and His-667.

The protein belongs to the class-II aminoacyl-tRNA synthetase family. Requires Zn(2+) as cofactor.

The protein localises to the cytoplasm. The enzyme catalyses tRNA(Ala) + L-alanine + ATP = L-alanyl-tRNA(Ala) + AMP + diphosphate. Functionally, catalyzes the attachment of alanine to tRNA(Ala) in a two-step reaction: alanine is first activated by ATP to form Ala-AMP and then transferred to the acceptor end of tRNA(Ala). Also edits incorrectly charged Ser-tRNA(Ala) and Gly-tRNA(Ala) via its editing domain. This Mycoplasmopsis synoviae (strain 53) (Mycoplasma synoviae) protein is Alanine--tRNA ligase.